A 274-amino-acid chain; its full sequence is 2,3,4,5-tetrahydropyridine-2,6-dicarboxylate N-succinyltransferase (274 aa).

It belongs to the transferase hexapeptide repeat family.

The protein localises to the cytoplasm. The catalysed reaction is (S)-2,3,4,5-tetrahydrodipicolinate + succinyl-CoA + H2O = (S)-2-succinylamino-6-oxoheptanedioate + CoA. The protein operates within amino-acid biosynthesis; L-lysine biosynthesis via DAP pathway; LL-2,6-diaminopimelate from (S)-tetrahydrodipicolinate (succinylase route): step 1/3. The protein is 2,3,4,5-tetrahydropyridine-2,6-dicarboxylate N-succinyltransferase of Delftia acidovorans (strain DSM 14801 / SPH-1).